The following is a 307-amino-acid chain: Glutathione synthetase (307 aa).

The region spanning 120–304 is the ATP-grasp domain; the sequence is KLGALRYSHL…VSDKVIEKLL (185 aa). 146–202 is an ATP binding site; that stretch reads AQINHDVVVKPLGGKGGQGVIRLTKDSPGIKAMIELITSQEQLPVMMQKFIPEVKEG. Residues glutamate 275 and asparagine 277 each coordinate Mg(2+).

Belongs to the prokaryotic GSH synthase family. Mg(2+) is required as a cofactor. Requires Mn(2+) as cofactor.

It catalyses the reaction gamma-L-glutamyl-L-cysteine + glycine + ATP = glutathione + ADP + phosphate + H(+). It functions in the pathway sulfur metabolism; glutathione biosynthesis; glutathione from L-cysteine and L-glutamate: step 2/2. The polypeptide is Glutathione synthetase (Prochlorococcus marinus subsp. pastoris (strain CCMP1986 / NIES-2087 / MED4)).